The primary structure comprises 489 residues: Probable cytosol aminopeptidase (489 aa).

Mn(2+)-binding residues include K260 and D265. K272 is an active-site residue. Mn(2+) is bound by residues D283, D342, and E344. Residue R346 is part of the active site.

It belongs to the peptidase M17 family. Mn(2+) serves as cofactor.

It is found in the cytoplasm. The catalysed reaction is Release of an N-terminal amino acid, Xaa-|-Yaa-, in which Xaa is preferably Leu, but may be other amino acids including Pro although not Arg or Lys, and Yaa may be Pro. Amino acid amides and methyl esters are also readily hydrolyzed, but rates on arylamides are exceedingly low.. It catalyses the reaction Release of an N-terminal amino acid, preferentially leucine, but not glutamic or aspartic acids.. Presumably involved in the processing and regular turnover of intracellular proteins. Catalyzes the removal of unsubstituted N-terminal amino acids from various peptides. This Alcanivorax borkumensis (strain ATCC 700651 / DSM 11573 / NCIMB 13689 / SK2) protein is Probable cytosol aminopeptidase.